The sequence spans 480 residues: Sulfate adenylyltransferase subunit 1 (480 aa).

The tr-type G domain maps to 30–248 (KGLLRFLTCG…TVDVKKEASK (219 aa)). Residues 39-46 (GSVDDGKS) are G1. GTP is bound at residue 39-46 (GSVDDGKS). A G2 region spans residues 97-101 (GITID). Residues 118–121 (DTPG) form a G3 region. GTP-binding positions include 118–122 (DTPGH) and 173–176 (NKMD). The G4 stretch occupies residues 173 to 176 (NKMD). Residues 211 to 213 (SAL) are G5.

The protein belongs to the TRAFAC class translation factor GTPase superfamily. Classic translation factor GTPase family. CysN/NodQ subfamily. In terms of assembly, heterodimer composed of CysD, the smaller subunit, and CysN.

It carries out the reaction sulfate + ATP + H(+) = adenosine 5'-phosphosulfate + diphosphate. It functions in the pathway sulfur metabolism; hydrogen sulfide biosynthesis; sulfite from sulfate: step 1/3. Its function is as follows. With CysD forms the ATP sulfurylase (ATPS) that catalyzes the adenylation of sulfate producing adenosine 5'-phosphosulfate (APS) and diphosphate, the first enzymatic step in sulfur assimilation pathway. APS synthesis involves the formation of a high-energy phosphoric-sulfuric acid anhydride bond driven by GTP hydrolysis by CysN coupled to ATP hydrolysis by CysD. This Photorhabdus laumondii subsp. laumondii (strain DSM 15139 / CIP 105565 / TT01) (Photorhabdus luminescens subsp. laumondii) protein is Sulfate adenylyltransferase subunit 1.